We begin with the raw amino-acid sequence, 245 residues long: 1-(5-phosphoribosyl)-5-[(5-phosphoribosylamino)methylideneamino] imidazole-4-carboxamide isomerase (245 aa).

Catalysis depends on Asp-8, which acts as the Proton acceptor. Residue Asp-131 is the Proton donor of the active site.

The protein belongs to the HisA/HisF family.

It localises to the cytoplasm. The catalysed reaction is 1-(5-phospho-beta-D-ribosyl)-5-[(5-phospho-beta-D-ribosylamino)methylideneamino]imidazole-4-carboxamide = 5-[(5-phospho-1-deoxy-D-ribulos-1-ylimino)methylamino]-1-(5-phospho-beta-D-ribosyl)imidazole-4-carboxamide. It functions in the pathway amino-acid biosynthesis; L-histidine biosynthesis; L-histidine from 5-phospho-alpha-D-ribose 1-diphosphate: step 4/9. The protein is 1-(5-phosphoribosyl)-5-[(5-phosphoribosylamino)methylideneamino] imidazole-4-carboxamide isomerase of Neisseria gonorrhoeae (strain ATCC 700825 / FA 1090).